The sequence spans 352 residues: C-C chemokine receptor type 5 (352 aa).

The Extracellular segment spans residues 1 to 30 (MDYQVSSPIYDIDYYTSEPCQKINVKQIAA). Tyrosine 3 is subject to Sulfotyrosine. O-linked (GalNAc...) serine glycosylation is found at serine 6 and serine 7. Sulfotyrosine is present on residues tyrosine 10, tyrosine 14, and tyrosine 15. Cystine bridges form between cysteine 20/cysteine 269 and cysteine 101/cysteine 178. Residues 31–58 (RLLPPLYSLVFIFGFVGNMLVILILINC) form a helical membrane-spanning segment. Residues 59-68 (KRLKSMTDIY) lie on the Cytoplasmic side of the membrane. The helical transmembrane segment at 69–89 (LLNLAISDLFFLLTVPFWAHY) threads the bilayer. Residues 90 to 102 (AAAQWDFGNTMCQ) lie on the Extracellular side of the membrane. Residues 103-124 (LLTGLYFIGFFSGIFFIILLTI) traverse the membrane as a helical segment. The Cytoplasmic portion of the chain corresponds to 125–141 (DRYLAIVHAVFALKART). Residues 142-166 (VTFGVVTSVITWVVAVFASLPGIIF) traverse the membrane as a helical segment. The Extracellular portion of the chain corresponds to 167–198 (TRSQKEGLHYTCSSHFPYSQYQFWKNFQTLKI). Residues 199–218 (VILGLVLPLLVMVICYSGIL) form a helical membrane-spanning segment. Topologically, residues 219–235 (KTLLRCRNEKKRHRAVR) are cytoplasmic. Residues 236–260 (LIFTIMIVYFLFWAPYNIVLLLNTF) traverse the membrane as a helical segment. Residues 261–277 (QEFFGLNNCSSSNRLDQ) lie on the Extracellular side of the membrane. The helical transmembrane segment at 278–301 (AMQVTETLGMTHCCINPIIYAFVG) threads the bilayer. Over 302 to 352 (EKFRNYLLVFFQKHIAKRFCKCCSIFQQEAPERASSVYTRSTGEQEISVGL) the chain is Cytoplasmic. Residues cysteine 321, cysteine 323, and cysteine 324 are each lipidated (S-palmitoyl cysteine). 4 positions are modified to phosphoserine; by BARK1: serine 336, serine 337, serine 342, and serine 349.

Belongs to the G-protein coupled receptor 1 family. Interacts with PRAF2. Efficient ligand binding to CCL3/MIP-1alpha and CCL4/MIP-1beta requires sulfation, O-glycosylation and sialic acid modifications. Glycosylation on Ser-6 is required for efficient binding of CCL4. Interacts with GRK2. Interacts with ARRB1 and ARRB2. Interacts with CNIH4. Interacts with S100A4; this interaction stimulates T-lymphocyte chemotaxis. Sulfated on at least 2 of the N-terminal tyrosines. Sulfation is required for efficient binding of the chemokines, CCL3 and CCL4. In terms of processing, palmitoylation in the C-terminal is important for cell surface expression. Post-translationally, phosphorylation on serine residues in the C-terminal is stimulated by binding CC chemokines especially by APO-RANTES. O-glycosylated, but not N-glycosylated. Ser-6 appears to be the major site even if Ser-7 may be also O-glycosylated. Also sialylated glycans present which contribute to chemokine binding. Thr-16 and Ser-17 may also be glycosylated and, if so, with small moieties such as a T-antigen.

Its subcellular location is the cell membrane. Functionally, receptor for a number of inflammatory CC-chemokines including CCL3/MIP-1-alpha, CCL4/MIP-1-beta and RANTES and subsequently transduces a signal by increasing the intracellular calcium ion level. May play a role in the control of granulocytic lineage proliferation or differentiation. Participates in T-lymphocyte migration to the infection site by acting as a chemotactic receptor. In Pan paniscus (Pygmy chimpanzee), this protein is C-C chemokine receptor type 5 (CCR5).